Here is a 104-residue protein sequence, read N- to C-terminus: MALTQEQKKQFKSIGHHLKPVLIVAENGLTEGVLAELERALNDHELIKVKLALAERDDRRALLDELCAQSRSDLVQSIGKMALVYRKNPKPNKNLSNISRFAGI.

The CRM domain maps to methionine 1 to asparagine 97.

This Pseudomonas aeruginosa (strain ATCC 15692 / DSM 22644 / CIP 104116 / JCM 14847 / LMG 12228 / 1C / PRS 101 / PAO1) protein is Probable RNA-binding protein PA4753.